The following is a 217-amino-acid chain: ATP synthase subunit a (217 aa).

Transmembrane regions (helical) follow at residues 5 to 25 (EHVITSIVAMVVALGVVLAAG), 63 to 83 (LIASIGLFVFFGNVMELLPFV), 89 to 109 (NINTTLALTLIVFFLYHFEGF), 120 to 140 (FMGPIKALAPFFFIIEIMSHL), 157 to 177 (GAILLISIIGVLIGNPFTLAV), and 191 to 213 (LAIVLQAFIFMILSTIYIAGAVV).

The protein belongs to the ATPase A chain family. F-type ATPases have 2 components, CF(1) - the catalytic core - and CF(0) - the membrane proton channel. CF(1) has five subunits: alpha(3), beta(3), gamma(1), delta(1), epsilon(1). CF(0) has three main subunits: a(1), b(2) and c(9-12). The alpha and beta chains form an alternating ring which encloses part of the gamma chain. CF(1) is attached to CF(0) by a central stalk formed by the gamma and epsilon chains, while a peripheral stalk is formed by the delta and b chains.

It localises to the cell inner membrane. Key component of the proton channel; it plays a direct role in the translocation of protons across the membrane. The polypeptide is ATP synthase subunit a (Hydrogenobaculum sp. (strain Y04AAS1)).